Consider the following 300-residue polypeptide: 3-dehydrocarnitine:acetyl-CoA trimethylamine transferase (300 aa).

Positions 51, 53, and 254 each coordinate Zn(2+).

This sequence belongs to the BKACE family. In terms of assembly, homotetramer. The cofactor is Zn(2+).

The enzyme catalyses 3-dehydrocarnitine + acetyl-CoA = N,N,N-trimethylglycyl-CoA + acetoacetate. Its pathway is amine and polyamine metabolism; carnitine metabolism. In terms of biological role, catalyzes the condensation of dehydrocarnitine and acetyl-CoA, forming acetoacetate and betainyl-CoA (N,N,N-trimethylglycyl-CoA). Is involved in a L-carnitine degradation pathway that allows R.meliloti to grow on L-carnitine as the sole source of carbon and nitrogen. This Rhizobium meliloti (strain 1021) (Ensifer meliloti) protein is 3-dehydrocarnitine:acetyl-CoA trimethylamine transferase.